A 638-amino-acid polypeptide reads, in one-letter code: 1-deoxy-D-xylulose-5-phosphate synthase (638 aa).

Residues H75 and 116–118 contribute to the thiamine diphosphate site; that span reads AHS. Residue D147 participates in Mg(2+) binding. Residues 148-149, N177, Y288, and E370 contribute to the thiamine diphosphate site; that span reads GA. N177 contributes to the Mg(2+) binding site.

This sequence belongs to the transketolase family. DXPS subfamily. Homodimer. Mg(2+) is required as a cofactor. Thiamine diphosphate serves as cofactor.

The catalysed reaction is D-glyceraldehyde 3-phosphate + pyruvate + H(+) = 1-deoxy-D-xylulose 5-phosphate + CO2. Its pathway is metabolic intermediate biosynthesis; 1-deoxy-D-xylulose 5-phosphate biosynthesis; 1-deoxy-D-xylulose 5-phosphate from D-glyceraldehyde 3-phosphate and pyruvate: step 1/1. Catalyzes the acyloin condensation reaction between C atoms 2 and 3 of pyruvate and glyceraldehyde 3-phosphate to yield 1-deoxy-D-xylulose-5-phosphate (DXP). In Cupriavidus pinatubonensis (strain JMP 134 / LMG 1197) (Cupriavidus necator (strain JMP 134)), this protein is 1-deoxy-D-xylulose-5-phosphate synthase.